Here is a 187-residue protein sequence, read N- to C-terminus: Meiotically up-regulated gene 155 protein (187 aa).

Residues 1–24 (MRPTSGCSKDDTIQKQNRRHNTVD) are disordered. 2 helical membrane passes run 83–105 (IISY…PFSH) and 163–183 (VMLT…LFIF).

The protein resides in the cytoplasm. The protein localises to the nucleus membrane. Functionally, has a role in meiosis. In Schizosaccharomyces pombe (strain 972 / ATCC 24843) (Fission yeast), this protein is Meiotically up-regulated gene 155 protein (mug155).